The sequence spans 603 residues: MATIEEIAHQIIEQQMGEIVTEQQTGQKIQIVTALDHNTQGKQFILTNHDGSTPSKVILARQDSTPGKVFLTTPDAAGVNQLFFTTPDLSAQHLQLLTDNSPDQGPNKVFDLCVVCGDKASGRHYGAVTCEGCKGFFKRSIRKNLVYSCRGSKDCIINKHHRNRCQYCRLQRCIAFGMKQDSVQCERKPIEVSREKSSNCAASTEKIYIRKDLRSPLTATPTFVTDSESTRSTGLLDSGMFMNIHPSGVKTESAVLMTSDKAESCQGDLSTLANVVTSLANLGKTKDLSQNSNEMSMIESLSNDDTSLCEFQEMQTNGDVSRAFDTLAKALNPGESTACQSSVAGMEGSVHLITGDSSINYTEKEGPLLSDSHVAFRLTMPSPMPEYLNVHYIGESASRLLFLSMHWALSIPSFQALGQENSISLVKAYWNELFTLGLAQCWQVMNVATILATFVNCLHNSLQQDKMSTERRKLLMEHIFKLQEFCNSMVKLCIDGYEYAYLKAIVLFSPDHPSLENMEQIEKFQEKAYVEFQDYITKTYPDDTYRLSRLLLRLPALRLMNATITEELFFKGLIGNIRIDSVIPHILKMEPADYNSQIIGHSI.

Positions M1–M178 are required for interaction with KAT2B. A DNA-binding region (nuclear receptor) is located at residues F110–C185. NR C4-type zinc fingers lie at residues C113–C133 and C149–C173. Phosphoserine is present on residues S197 and S215. A Phosphothreonine modification is found at T220. A Phosphothreonine; by MAPK1 modification is found at T222. Residue K250 forms a Glycyl lysine isopeptide (Lys-Gly) (interchain with G-Cter in SUMO2) linkage. The NR LBD domain maps to G348 to E590. Residue S581 is modified to Phosphoserine; by PKC. Residues P584–I603 form a required for interaction with NRIP1 region. K588 is covalently cross-linked (Glycyl lysine isopeptide (Lys-Gly) (interchain with G-Cter in SUMO2)).

This sequence belongs to the nuclear hormone receptor family. NR2 subfamily. As to quaternary structure, homodimer. Heterodimer; binds DNA as a heterodimer with NR2C2 required for chromatin remodeling and for binding to promoter regions such as globin DR1 repeats. Interacts with NRIP1 (via its LXXLL motifs); the interaction provides corepressor activity. Interacts with HDAC3 (via the DNA-binding domain). Interacts with HDAC4 (via the DNA-binding domain). Interacts with PIAS1; the interaction is required for sumoylation of NR2C1. Interacts with UBE2I; the interaction is required for sumoylation of NR2C1. Interacts with KAT2B; the interaction acts as a corepressor of gene expression. Interacts with ESR1; the interaction prevents homodimerization of ESR1 and suppresses its transcriptional activity and cell growth. Post-translationally, sumoylation requires both PIAS1 and UBE2I. Sumoylation appears to dissociate NR2C1 from the PML nuclear bodies. Enhances the interaction with NRIP1 but inhibits interaction with KAT2B. In proliferating cells, stimulation by all-trans retinoic acid, activation of MAPK1-mediated phosphorylation and recruitment to PML bodies with subsequent sumoylation, suppresses OCT4 expression. In terms of processing, phosphorylated on several serine and threonine residues. Phosphorylation on Thr-222, stimulated by all-trans retinoic acid (atRA) mediates PML location and sumoylation in proliferating cells which then modulates its association with effector molecules, KAT2B and NRIP1. Phosphorylation on Ser-581 by PKC is important for protein stability and function as activator of RARB.

The protein localises to the nucleus. Its subcellular location is the PML body. Its function is as follows. Orphan nuclear receptor. Binds the IR7 element in the promoter of its own gene in an autoregulatory negative feedback mechanism. Primarily repressor of a broad range of genes. Binds to hormone response elements (HREs) consisting of two 5'-AGGTCA-3' half site direct repeat consensus sequences. Together with NR2C2, forms the core of the DRED (direct repeat erythroid-definitive) complex that represses embryonic and fetal globin transcription. Also activator of OCT4 gene expression. May be involved in stem cell proliferation and differentiation. Mediator of retinoic acid-regulated preadipocyte proliferation. In Homo sapiens (Human), this protein is Nuclear receptor subfamily 2 group C member 1 (NR2C1).